We begin with the raw amino-acid sequence, 199 residues long: NADH-quinone oxidoreductase subunit I (199 aa).

4Fe-4S ferredoxin-type domains are found at residues 45–75 (LNRH…VEGA) and 91–120 (RVYQ…MSNE). [4Fe-4S] cluster-binding residues include Cys55, Cys58, Cys61, Cys65, Cys100, Cys103, Cys106, and Cys110. A disordered region spans residues 164–199 (GTPAAHMLSGEDDAASETTLDRSDDHSATYEEAERP). Positions 182–199 (TLDRSDDHSATYEEAERP) are enriched in basic and acidic residues.

Belongs to the complex I 23 kDa subunit family. In terms of assembly, NDH-1 is composed of 14 different subunits. Subunits NuoA, H, J, K, L, M, N constitute the membrane sector of the complex. Requires [4Fe-4S] cluster as cofactor.

Its subcellular location is the cell membrane. The catalysed reaction is a quinone + NADH + 5 H(+)(in) = a quinol + NAD(+) + 4 H(+)(out). NDH-1 shuttles electrons from NADH, via FMN and iron-sulfur (Fe-S) centers, to quinones in the respiratory chain. The immediate electron acceptor for the enzyme in this species is believed to be ubiquinone. Couples the redox reaction to proton translocation (for every two electrons transferred, four hydrogen ions are translocated across the cytoplasmic membrane), and thus conserves the redox energy in a proton gradient. This is NADH-quinone oxidoreductase subunit I from Acidothermus cellulolyticus (strain ATCC 43068 / DSM 8971 / 11B).